A 374-amino-acid chain; its full sequence is Aminomethyltransferase (374 aa).

This sequence belongs to the GcvT family. As to quaternary structure, the glycine cleavage system is composed of four proteins: P, T, L and H.

It catalyses the reaction N(6)-[(R)-S(8)-aminomethyldihydrolipoyl]-L-lysyl-[protein] + (6S)-5,6,7,8-tetrahydrofolate = N(6)-[(R)-dihydrolipoyl]-L-lysyl-[protein] + (6R)-5,10-methylene-5,6,7,8-tetrahydrofolate + NH4(+). In terms of biological role, the glycine cleavage system catalyzes the degradation of glycine. The sequence is that of Aminomethyltransferase from Prochlorococcus marinus (strain MIT 9313).